A 35-amino-acid polypeptide reads, in one-letter code: UPF0387 membrane protein YohO (35 aa).

The helical transmembrane segment at 6-26 (IGVIALFLLMAIGGIGGVMLA) threads the bilayer.

This sequence belongs to the UPF0387 family.

It localises to the cell inner membrane. This chain is UPF0387 membrane protein YohO, found in Salmonella paratyphi A (strain ATCC 9150 / SARB42).